The following is a 287-amino-acid chain: MLARFPLYLRLVRMDKPIGSLLLLWPTLNALWIASDGRPRWPLLVIFTLGTLLMRSAGCAMNDYADRDFDRHVKRTADRPLTSGKIRAWEAVAIAVGLSFIAFLLILPLNTLTKELSVVALFVAGSYPFMKRFFAIPQAYLGIAFGFGIPMAFAAVQDTVPMLAWVMLVANIFWSVAYDTEYAMVDRDDDIKIGIRTSALTFGRFDVAAVMACYAATLGIYVWIGVTLGFGLAYWAGWAAAVGCALYHYTLIKDRERMPCFAAFRHNNWLGGVLFAGIAVHYLLAGN.

The next 6 membrane-spanning stretches (helical) occupy residues 41 to 61, 89 to 109, 133 to 153, 158 to 178, 202 to 224, and 266 to 286; these read WPLL…GCAM, WEAV…ILPL, FFAI…PMAF, DTVP…SVAY, FGRF…YVWI, and HNNW…LLAG.

Belongs to the UbiA prenyltransferase family. It depends on Mg(2+) as a cofactor.

It localises to the cell inner membrane. It carries out the reaction all-trans-octaprenyl diphosphate + 4-hydroxybenzoate = 4-hydroxy-3-(all-trans-octaprenyl)benzoate + diphosphate. Its pathway is cofactor biosynthesis; ubiquinone biosynthesis. Catalyzes the prenylation of para-hydroxybenzoate (PHB) with an all-trans polyprenyl group. Mediates the second step in the final reaction sequence of ubiquinone-8 (UQ-8) biosynthesis, which is the condensation of the polyisoprenoid side chain with PHB, generating the first membrane-bound Q intermediate 3-octaprenyl-4-hydroxybenzoate. This Burkholderia orbicola (strain MC0-3) protein is 4-hydroxybenzoate octaprenyltransferase.